The following is an 830-amino-acid chain: V-type proton ATPase 116 kDa subunit a 3 (830 aa).

At Met-1–Glu-385 the chain is on the cytoplasmic side. The disordered stretch occupies residues Gln-139–Pro-158. A helical transmembrane segment spans residues Val-386–Phe-404. Over Gly-405–Asp-406 the chain is Vacuolar. The chain crosses the membrane as a helical span at residues Val-407–Ala-423. The Cytoplasmic segment spans residues Glu-424–Gln-438. A helical transmembrane segment spans residues Thr-439–Ala-468. Topologically, residues Thr-469–Ser-532 are vacuolar. The helical transmembrane segment at Phe-533–Leu-552 threads the bilayer. At Gly-553 to Thr-570 the chain is on the cytoplasmic side. Residues Leu-571–Lys-591 form a helical membrane-spanning segment. Topologically, residues Trp-592 to Thr-635 are vacuolar. Residues Leu-636 to Leu-655 form a helical membrane-spanning segment. Topologically, residues Leu-656–Thr-720 are cytoplasmic. Residues Leu-681–Asp-701 are disordered. Residues Ile-721–Ala-745 traverse the membrane as a helical segment. The Vacuolar portion of the chain corresponds to Gln-746–Val-766. The chain crosses the membrane as a helical span at residues Gly-767–Glu-807. The Cytoplasmic portion of the chain corresponds to Phe-808 to Asp-830.

This sequence belongs to the V-ATPase 116 kDa subunit family. In terms of assembly, V-ATPase is a heteromultimeric enzyme made up of two complexes: the ATP-hydrolytic V1 complex and the proton translocation V0 complex. The V1 complex consists of three catalytic AB heterodimers that form a heterohexamer, three peripheral stalks each consisting of EG heterodimers, one central rotor including subunits D and F, and the regulatory subunits C and H. The proton translocation complex V0 consists of the proton transport subunit a, a ring of proteolipid subunits c9c'', rotary subunit d, subunits e and f, and the accessory subunits ATP6AP1/Ac45 and ATP6AP2/PRR. As to expression, isoform long is highly expressed in osteoclastomas. Isoform short is highly expressed in thymus.

It localises to the membrane. Functionally, subunit of the V0 complex of vacuolar(H+)-ATPase (V-ATPase), a multisubunit enzyme composed of a peripheral complex (V1) that hydrolyzes ATP and a membrane integral complex (V0) that translocates protons. V-ATPase is responsible for acidifying and maintaining the pH of intracellular compartments and in some cell types, is targeted to the plasma membrane, where it is responsible for acidifying the extracellular environment. Seems to be directly involved in T-cell activation. This is V-type proton ATPase 116 kDa subunit a 3 (TCIRG1) from Homo sapiens (Human).